Reading from the N-terminus, the 106-residue chain is Photosystem II 5 kDa protein, chloroplastic (106 aa).

The transit peptide at 1–76 (MASITMMSSF…ACSVAKTAMA (76 aa)) directs the protein to the chloroplast. Residues cysteine 95 and cysteine 104 are joined by a disulfide bond.

Post-translationally, disulfide bond. Expressed in midvein, lamina and periphery of leaves (at protein level).

The protein resides in the plastid. It is found in the chloroplast thylakoid membrane. May be a component of the oxygen-evolving complex. The chain is Photosystem II 5 kDa protein, chloroplastic from Petunia hybrida (Petunia).